The chain runs to 493 residues: Guanosine-5'-triphosphate,3'-diphosphate pyrophosphatase (493 aa).

The protein belongs to the GppA/Ppx family. GppA subfamily.

It catalyses the reaction guanosine 3'-diphosphate 5'-triphosphate + H2O = guanosine 3',5'-bis(diphosphate) + phosphate + H(+). The protein operates within purine metabolism; ppGpp biosynthesis; ppGpp from GTP: step 2/2. Catalyzes the conversion of pppGpp to ppGpp. Guanosine pentaphosphate (pppGpp) is a cytoplasmic signaling molecule which together with ppGpp controls the 'stringent response', an adaptive process that allows bacteria to respond to amino acid starvation, resulting in the coordinated regulation of numerous cellular activities. This Salmonella choleraesuis (strain SC-B67) protein is Guanosine-5'-triphosphate,3'-diphosphate pyrophosphatase.